The primary structure comprises 457 residues: Aromatic amino acid transport protein AroP (457 aa).

At 1 to 19 (MMEGQQHGEQLKRGLKNRH) the chain is on the cytoplasmic side. A helical transmembrane segment spans residues 20–40 (IQLIALGGAIGTGLFLGSASV). The Periplasmic segment spans residues 41-42 (IQ). Residues 43-63 (SAGPGIILGYAIAGFIAFLIM) traverse the membrane as a helical segment. Residues 64 to 86 (RQLGEMVVEEPVAGSFSHFAYKY) lie on the Cytoplasmic side of the membrane. A helical membrane pass occupies residues 87–107 (WGSFAGFASGWNYWVLYVLVA). Topologically, residues 108–117 (MAELTAVGKY) are periplasmic. A helical transmembrane segment spans residues 118-138 (IQFWYPEIPTWVSAAVFFVVI). Residues 139–155 (NAINLTNVTVFGEMEFW) lie on the Cytoplasmic side of the membrane. A helical transmembrane segment spans residues 156-176 (FAIIKVIAVVAMIIFGGWLLF). The Periplasmic portion of the chain corresponds to 177-201 (SGNGGPQASVSNLWDQGGFLPHGFT). Residues 202 to 222 (GLVMMMAIIMFSFGGLELVGI) form a helical membrane-spanning segment. At 223–240 (TAAEADNPEQSIPKATNQ) the chain is on the cytoplasmic side. The chain crosses the membrane as a helical span at residues 241–261 (VIYRILIFYIGSLAVLLSLMP). At 262–271 (WTRVTADTSP) the chain is on the periplasmic side. A helical membrane pass occupies residues 272–292 (FVLIFHELGDTFVANALNIVV). The Cytoplasmic portion of the chain corresponds to 293–333 (LTAALSVYNSCVYCNSRMLFGLAQQGNAPKALASVDKRGVP). The chain crosses the membrane as a helical span at residues 334-354 (VNTILVSALVTALCVLINYLA). The Periplasmic segment spans residues 355–358 (PESA). The helical transmembrane segment at 359-379 (FGLLMALVVSALVINWAMISL) threads the bilayer. At 380–407 (AHMKFRRAKQEQGVVTRFPALLYPLGNW) the chain is on the cytoplasmic side. Residues 408–428 (ICLLFMAVVLVIMLMTPGMAI) traverse the membrane as a helical segment. A topological domain (periplasmic) is located at residue Ser429. The helical transmembrane segment at 430 to 450 (VYLIPVWLVVLGIGYLFKEKT) threads the bilayer. Residues 451–457 (AKAVKAH) are Cytoplasmic-facing.

The protein belongs to the amino acid-polyamine-organocation (APC) superfamily. Amino acid transporter (AAT) (TC 2.A.3.1) family.

The protein localises to the cell inner membrane. The catalysed reaction is L-phenylalanine(in) + H(+)(in) = L-phenylalanine(out) + H(+)(out). It carries out the reaction L-tryptophan(in) + H(+)(in) = L-tryptophan(out) + H(+)(out). The enzyme catalyses L-tyrosine(in) + H(+)(in) = L-tyrosine(out) + H(+)(out). Functionally, permease that is involved in the active transport across the cytoplasmic membrane of all three aromatic amino acids, phenylalanine, tyrosine and tryptophan. This is Aromatic amino acid transport protein AroP (aroP) from Escherichia coli O157:H7.